Consider the following 37-residue polypeptide: Large ribosomal subunit protein bL36 (37 aa).

This sequence belongs to the bacterial ribosomal protein bL36 family.

In Synechococcus sp. (strain WH7803), this protein is Large ribosomal subunit protein bL36.